A 1392-amino-acid chain; its full sequence is DNA-directed RNA polymerase subunit beta'' (1392 aa).

Cysteine 224, cysteine 295, cysteine 302, and cysteine 305 together coordinate Zn(2+).

Belongs to the RNA polymerase beta' chain family. RpoC2 subfamily. In terms of assembly, in plastids the minimal PEP RNA polymerase catalytic core is composed of four subunits: alpha, beta, beta', and beta''. When a (nuclear-encoded) sigma factor is associated with the core the holoenzyme is formed, which can initiate transcription. The cofactor is Zn(2+).

The protein resides in the plastid. Its subcellular location is the chloroplast. It carries out the reaction RNA(n) + a ribonucleoside 5'-triphosphate = RNA(n+1) + diphosphate. Functionally, DNA-dependent RNA polymerase catalyzes the transcription of DNA into RNA using the four ribonucleoside triphosphates as substrates. The protein is DNA-directed RNA polymerase subunit beta'' of Solanum lycopersicum (Tomato).